Here is a 1491-residue protein sequence, read N- to C-terminus: Chromosome partition protein MukB (1491 aa).

Residue 34 to 41 (GGNGAGKS) coordinates ATP. Coiled-coil stretches lie at residues 302–450 (LIEQ…LKAE), 490–600 (ARSE…RFES), 781–806 (RAAREQRLELLREERDDVVEQHAKAS), 836–1109 (EQAL…DLRT), and 1210–1239 (VEAIEEMEVELARLTEELTQREQRLAISSD). A flexible hinge region spans residues 667 to 784 (PGGSNDPRLK…AIPLFGRAAR (118 aa)). The tract at residues 1059–1080 (QRRRDELQERLHTSRSRKSEYE) is disordered.

It belongs to the SMC family. MukB subfamily. Homodimerization via its hinge domain. Binds to DNA via its C-terminal region. Interacts, and probably forms a ternary complex, with MukE and MukF via its C-terminal region. The complex formation is stimulated by calcium or magnesium. Interacts with tubulin-related protein FtsZ.

The protein localises to the cytoplasm. It localises to the nucleoid. Its function is as follows. Plays a central role in chromosome condensation, segregation and cell cycle progression. Functions as a homodimer, which is essential for chromosome partition. Involved in negative DNA supercoiling in vivo, and by this means organize and compact chromosomes. May achieve or facilitate chromosome segregation by condensation DNA from both sides of a centrally located replisome during cell division. This chain is Chromosome partition protein MukB, found in Vibrio cholerae serotype O1 (strain ATCC 39315 / El Tor Inaba N16961).